The sequence spans 99 residues: Large ribosomal subunit protein uL23 (99 aa).

The protein belongs to the universal ribosomal protein uL23 family. Part of the 50S ribosomal subunit. Contacts protein L29, and trigger factor when it is bound to the ribosome.

In terms of biological role, one of the early assembly proteins it binds 23S rRNA. One of the proteins that surrounds the polypeptide exit tunnel on the outside of the ribosome. Forms the main docking site for trigger factor binding to the ribosome. In Pseudomonas fluorescens (strain SBW25), this protein is Large ribosomal subunit protein uL23.